We begin with the raw amino-acid sequence, 552 residues long: AP-1-like transcription factor (552 aa).

The segment covering 1 to 14 (MSGQTETLSSTSNI) has biased composition (polar residues). A disordered region spans residues 1-99 (MSGQTETLSS…QRAFRKRKED (99 aa)). Basic and acidic residues predominate over residues 36 to 47 (PVSDRSSRRTSS). The span at 48-61 (EEVDLMPNVDDEVD) shows a compositional bias: acidic residues. A compositionally biased stretch (basic and acidic residues) spans 62 to 80 (GDVKPKKIGRKNSDQEPSS). The bZIP domain maps to 76-139 (QEPSSKRKAQ…RQLEEELRIL (64 aa)). A Nuclear localization signal motif is present at residues 81–88 (KRKAQNRA). A basic motif region spans residues 81–102 (KRKAQNRAAQRAFRKRKEDHLK). Positions 104 to 111 (LETQVVTL) are leucine-zipper. The disordered stretch occupies residues 213–244 (QVPPTLVDSNSAQGTLSPETPSSSDSPSNLYL). Residues 219 to 228 (VDSNSAQGTL) are compositionally biased toward polar residues. Over residues 229-240 (SPETPSSSDSPS) the composition is skewed to low complexity. A n-CRD region spans residues 259 to 290 (CSALSNGENGEDVADGKQFCQKLSTACGSIAC). 2 disulfide bridges follow: Cys278-Cys501 and Cys285-Cys532. Residues 460-489 (ISNHPDEVPPDGLPQKGKHDTSSQMPSENE) form a disordered region. Residues 501 to 532 (CPKVWSKIINHPRFESFDIDDLCSKLKNKAKC) are c-CRD. A Nuclear export signal motif is present at residues 515–533 (ESFDIDDLCSKLKNKAKCS).

The protein belongs to the bZIP family. YAP subfamily. In terms of assembly, homodimer. The reduced form of pap1 interacts in the nucleus with the nuclear export protein crm1, and in the cytoplasm with the peroxiredoxin tpx1. In terms of processing, depending on the oxidative stress inducing agent, pap1 can undergo two distinct conformational changes, both masking the nuclear export signal, thus abolishing nuclear export by crm1/exportin 1. The glutathione-depleting agent diethylmaleate (DEM) leads to the non-reversible modification of at least 2 cysteine residues in the c-CRD. Peroxide stress induces the formation of a tpx1-dependent interdomain disulfide bond between Cys-278 and Cys-501.

The protein resides in the nucleus. The protein localises to the cytoplasm. In terms of biological role, transcription activator involved in multidrug resistance, oxidative stress response, and redox homeostasis. Regulates the transcription of genes encoding antioxidant enzymes like catalase ctt1 and components of the cellular thiol-reducing pathways, including the thioredoxin system (trx2, trr1), ABC transporters involved in multidrug resistance like bfr1/hba2 and pmd1 as well as the gene obr1/apt1. Preferentially binds to promoters with the core binding site 5'-TTA[CG]TAA-3'. Activity of the transcription factor is controlled through oxidation of specific cysteine residues resulting in the alteration of its subcellular location. Oxidative stress induces nuclear accumulation and as a result pap1 transcriptional activity. Required for sty1/spc1-conferred staurosporine resistance. The sequence is that of AP-1-like transcription factor (pap1) from Schizosaccharomyces pombe (strain 972 / ATCC 24843) (Fission yeast).